The following is a 199-amino-acid chain: dITP/XTP pyrophosphatase (199 aa).

8 to 13 (TSNINK) is a substrate binding site. Residue Asp-68 is the Proton acceptor of the active site. Asp-68 lines the Mg(2+) pocket. Substrate is bound by residues Ser-69, 155–158 (FGYD), Lys-177, and 182–183 (HR).

This sequence belongs to the HAM1 NTPase family. As to quaternary structure, homodimer. Mg(2+) is required as a cofactor.

It carries out the reaction XTP + H2O = XMP + diphosphate + H(+). It catalyses the reaction dITP + H2O = dIMP + diphosphate + H(+). The enzyme catalyses ITP + H2O = IMP + diphosphate + H(+). Its function is as follows. Pyrophosphatase that catalyzes the hydrolysis of nucleoside triphosphates to their monophosphate derivatives, with a high preference for the non-canonical purine nucleotides XTP (xanthosine triphosphate), dITP (deoxyinosine triphosphate) and ITP. Seems to function as a house-cleaning enzyme that removes non-canonical purine nucleotides from the nucleotide pool, thus preventing their incorporation into DNA/RNA and avoiding chromosomal lesions. This is dITP/XTP pyrophosphatase from Borrelia duttonii (strain Ly).